The sequence spans 710 residues: Subtilisin-like protease SBT4.8 (710 aa).

A signal peptide spans 1-23 (MVKRASFCLLSCLIILFLSSVSA). Positions 24–111 (IIYDPQDKQV…VFRSKNYKLQ (88 aa)) are cleaved as a propeptide — activation peptide. Positions 33-110 (VYVVYMGSLP…SVFRSKNYKL (78 aa)) constitute an Inhibitor I9 domain. Positions 115–559 (SWDFMGMKEG…AGHVDPIAAI (445 aa)) constitute a Peptidase S8 domain. Asp143 serves as the catalytic Charge relay system. A glycan (N-linked (GlcNAc...) asparagine) is linked at Asn174. His198 functions as the Charge relay system in the catalytic mechanism. N-linked (GlcNAc...) asparagine glycans are attached at residues Asn221, Asn364, and Asn419. Residues 354-414 (KYPLEYGDYL…VLSQDDFDSL (61 aa)) form the PA domain. Ser498 serves as the catalytic Charge relay system. Residues Asn535, Asn568, Asn580, Asn618, and Asn636 are each glycosylated (N-linked (GlcNAc...) asparagine).

It belongs to the peptidase S8 family. In terms of processing, the C-terminal propeptide is autocleaved.

The protein resides in the secreted. This chain is Subtilisin-like protease SBT4.8, found in Arabidopsis thaliana (Mouse-ear cress).